Consider the following 498-residue polypeptide: UDP-N-acetylmuramate--L-alanine ligase (498 aa).

120-126 (GSHGKTT) provides a ligand contact to ATP.

This sequence belongs to the MurCDEF family.

The protein localises to the cytoplasm. It carries out the reaction UDP-N-acetyl-alpha-D-muramate + L-alanine + ATP = UDP-N-acetyl-alpha-D-muramoyl-L-alanine + ADP + phosphate + H(+). It participates in cell wall biogenesis; peptidoglycan biosynthesis. Cell wall formation. The sequence is that of UDP-N-acetylmuramate--L-alanine ligase from Rickettsia typhi (strain ATCC VR-144 / Wilmington).